The sequence spans 304 residues: Secreted mono- and diacylglycerol lipase MDL2 (304 aa).

Residues 1–19 (MILGRTISLFLGCSALVSG) form the signal peptide. An intrachain disulfide couples cysteine 55 to cysteine 297. Residues asparagine 102 and asparagine 161 are each glycosylated (N-linked (GlcNAc...) asparagine). Serine 171 functions as the Nucleophile in the catalytic mechanism. Aspartate 228 is a catalytic residue. N-linked (GlcNAc...) asparagine glycosylation is present at asparagine 253. Residue histidine 281 is part of the active site.

The protein belongs to the AB hydrolase superfamily. Lipase family. Class 3 subfamily.

It localises to the secreted. The protein resides in the cell wall. The catalysed reaction is a monoacylglycerol + H2O = glycerol + a fatty acid + H(+). The enzyme catalyses a diacylglycerol + H2O = a monoacylglycerol + a fatty acid + H(+). Its function is as follows. Secreted lipase involved in Dandruff and seborrheic dermatitis (D/SD) probably via lipase-mediated breakdown of sebaceous lipids and release of irritating free fatty acids. Shows activity against monoglyceride and diglyceride substrates, but not triglyceride substrates and does not exhibit regio-selective production of diacylglycerols. Hydrolyzes both 1,2- and 1,3-diacylglycerols. Also hydrolyzes distearin, dilinolein and dipalmitolein. Cleaves oleic acid from 1,2 isomers of diolein on both the 1 and the 2 position of the glycerol backbone, resulting mainly in free fatty acids but no monoolein is detected. Shows activity on monoolein and liberates mostly free fatty acids, but can also perform the reverse reaction and produce diolein. In Malassezia globosa (strain ATCC MYA-4612 / CBS 7966) (Dandruff-associated fungus), this protein is Secreted mono- and diacylglycerol lipase MDL2.